Reading from the N-terminus, the 587-residue chain is Protein FRIGIDA-ESSENTIAL 1 (587 aa).

The C3H1-type zinc finger occupies 96-123; that stretch reads KRAALPCKFFAKGWCFNGVSCKFLHVKE. Disordered regions lie at residues 264–346, 368–421, and 467–492; these read DMGS…SFTI, GDRP…HQET, and IKPAGHDSWHRSDGSSYKKTKKSDEI. A compositionally biased stretch (low complexity) spans 294–304; the sequence is NGNSLSGSGSL. Residues 470–479 are compositionally biased toward basic and acidic residues; the sequence is AGHDSWHRSD.

Component of the transcription activator complex FRI-C composed of FRI, FRL1, SUF4, FLX and FES1. Interacts with FLX, (via C-terminus) with FRI (via C-terminus), and with RIN1, a component of the SWR1 chromatin-remodeling complex. As to expression, expressed in root and shoot apices and vasculature.

Its subcellular location is the nucleus. In terms of biological role, transcriptional activator involved in the FRIGIDA-mediated vernalization pathway, but not in the autonomous flowering pathway. Acts cooperatively with FRI (FRIGIDA) or FRL1 (FRIGIDA-LIKE 1) to promote FLC (FLOWERING LOCUS C) expression. Required for the stabilization of the FRI-C complex. The polypeptide is Protein FRIGIDA-ESSENTIAL 1 (FES1) (Arabidopsis thaliana (Mouse-ear cress)).